The sequence spans 250 residues: Small ribosomal subunit protein uS3 (250 aa).

The region spanning valine 39–arginine 107 is the KH type-2 domain. Residues leucine 215–alanine 250 form a disordered region. The span at glycine 230–alanine 250 shows a compositional bias: basic and acidic residues.

It belongs to the universal ribosomal protein uS3 family. In terms of assembly, part of the 30S ribosomal subunit. Forms a tight complex with proteins S10 and S14.

Its function is as follows. Binds the lower part of the 30S subunit head. Binds mRNA in the 70S ribosome, positioning it for translation. This is Small ribosomal subunit protein uS3 from Caulobacter vibrioides (strain ATCC 19089 / CIP 103742 / CB 15) (Caulobacter crescentus).